We begin with the raw amino-acid sequence, 208 residues long: dITP/XTP pyrophosphatase (208 aa).

16–21 (SNNKGK) is a substrate binding site. Asp-79 (proton acceptor) is an active-site residue. Position 79 (Asp-79) interacts with Mg(2+). Residues Ser-80, 166–169 (FGYD), Lys-189, and 194–195 (HR) each bind substrate.

Belongs to the HAM1 NTPase family. Homodimer. The cofactor is Mg(2+).

The enzyme catalyses XTP + H2O = XMP + diphosphate + H(+). It carries out the reaction dITP + H2O = dIMP + diphosphate + H(+). It catalyses the reaction ITP + H2O = IMP + diphosphate + H(+). Pyrophosphatase that catalyzes the hydrolysis of nucleoside triphosphates to their monophosphate derivatives, with a high preference for the non-canonical purine nucleotides XTP (xanthosine triphosphate), dITP (deoxyinosine triphosphate) and ITP. Seems to function as a house-cleaning enzyme that removes non-canonical purine nucleotides from the nucleotide pool, thus preventing their incorporation into DNA/RNA and avoiding chromosomal lesions. This is dITP/XTP pyrophosphatase from Acinetobacter baumannii (strain ACICU).